A 316-amino-acid polypeptide reads, in one-letter code: Serine protease 45 (316 aa).

Residues 1-38 form the signal peptide; the sequence is MAASLSRLSAGLAASRPLGLSRSFLLLVLLLLNSGYKG. A Peptidase S1 domain is found at 49–290; that stretch reads WWPKNLDLSR…YSRWIKKQIS (242 aa). C74 and C90 are joined by a disulfide. H89 functions as the Charge relay system in the catalytic mechanism. N110 carries N-linked (GlcNAc...) asparagine glycosylation. Catalysis depends on D137, which acts as the Charge relay system. Residues N162 and N186 are each glycosylated (N-linked (GlcNAc...) asparagine). Cystine bridges form between C171/C248, C206/C229, and C238/C266. S242 acts as the Charge relay system in catalysis.

Belongs to the peptidase S1 family.

It localises to the secreted. This chain is Serine protease 45 (PRSS45), found in Bos taurus (Bovine).